The chain runs to 608 residues: Malonate--CoA ligase (608 aa).

This sequence belongs to the ATP-dependent AMP-binding enzyme family. As to expression, expressed in flowers.

The protein resides in the cytoplasm. It localises to the nucleus. The catalysed reaction is malonate + ATP + CoA = malonyl-CoA + AMP + diphosphate. Malonate--CoA ligase that catalyzes the formation of malonyl-CoA directly from malonate and CoA. May be required for the detoxification of malonate. The chain is Malonate--CoA ligase (AAE13) from Arabidopsis thaliana (Mouse-ear cress).